The primary structure comprises 289 residues: ATP synthase gamma chain (289 aa).

This sequence belongs to the ATPase gamma chain family. F-type ATPases have 2 components, CF(1) - the catalytic core - and CF(0) - the membrane proton channel. CF(1) has five subunits: alpha(3), beta(3), gamma(1), delta(1), epsilon(1). CF(0) has three main subunits: a, b and c.

It is found in the cell inner membrane. In terms of biological role, produces ATP from ADP in the presence of a proton gradient across the membrane. The gamma chain is believed to be important in regulating ATPase activity and the flow of protons through the CF(0) complex. This chain is ATP synthase gamma chain, found in Polynucleobacter necessarius subsp. necessarius (strain STIR1).